A 71-amino-acid polypeptide reads, in one-letter code: MDVRERNVFGNASVATPGEHQKFVRELILSGHNNVVLQTYTGKWSDCRKHGKSVMYNTGEARHPTCKAHQR.

It belongs to the varicellovirus ORF57 protein family.

This is an uncharacterized protein from Homo sapiens (Human).